We begin with the raw amino-acid sequence, 620 residues long: Glutathione-regulated potassium-efflux system protein KefC (620 aa).

The next 12 membrane-spanning stretches (helical) occupy residues 4 to 24 (HTLI…PIAV), 26 to 46 (LGLG…PWGL), 54 to 74 (SILH…GLEL), 90 to 110 (GALQ…LLGL), 114 to 134 (VAEL…MQAM), 149 to 169 (FAVL…IPLL), 178 to 198 (MGAF…VVLL), 218 to 238 (VFSA…EEVG), 270 to 290 (GLLL…GTLI), 294 to 314 (LRIV…LWLI), 327 to 347 (WFAV…GAAQ), and 359 to 379 (SLTL…VILN). In terms of domain architecture, RCK N-terminal spans 399-518 (QPRVIIAGFG…AGVEKPERET (120 aa)). A disordered region spans residues 597 to 620 (GWQGTEEGKHTGNMADEPETKPSS).

This sequence belongs to the monovalent cation:proton antiporter 2 (CPA2) transporter (TC 2.A.37) family. KefC subfamily. Homodimer. Interacts with the regulatory subunit KefF.

It localises to the cell inner membrane. In terms of biological role, pore-forming subunit of a potassium efflux system that confers protection against electrophiles. Catalyzes K(+)/H(+) antiport. In Escherichia coli (strain SMS-3-5 / SECEC), this protein is Glutathione-regulated potassium-efflux system protein KefC.